The sequence spans 246 residues: 3-deoxy-manno-octulosonate cytidylyltransferase (246 aa).

It belongs to the KdsB family.

The protein resides in the cytoplasm. The catalysed reaction is 3-deoxy-alpha-D-manno-oct-2-ulosonate + CTP = CMP-3-deoxy-beta-D-manno-octulosonate + diphosphate. The protein operates within nucleotide-sugar biosynthesis; CMP-3-deoxy-D-manno-octulosonate biosynthesis; CMP-3-deoxy-D-manno-octulosonate from 3-deoxy-D-manno-octulosonate and CTP: step 1/1. It functions in the pathway bacterial outer membrane biogenesis; lipopolysaccharide biosynthesis. In terms of biological role, activates KDO (a required 8-carbon sugar) for incorporation into bacterial lipopolysaccharide in Gram-negative bacteria. The polypeptide is 3-deoxy-manno-octulosonate cytidylyltransferase (Paramagnetospirillum magneticum (strain ATCC 700264 / AMB-1) (Magnetospirillum magneticum)).